The following is a 100-amino-acid chain: Integration host factor subunit alpha (100 aa).

This sequence belongs to the bacterial histone-like protein family. In terms of assembly, heterodimer of an alpha and a beta chain.

Its function is as follows. This protein is one of the two subunits of integration host factor, a specific DNA-binding protein that functions in genetic recombination as well as in transcriptional and translational control. This chain is Integration host factor subunit alpha, found in Erythrobacter litoralis (strain HTCC2594).